The chain runs to 625 residues: Very-long-chain aldehyde decarbonylase CER1 (625 aa).

Helical transmembrane passes span 45-65, 126-146, 177-197, 200-220, and 329-349; these read LGYFLVFPFLLFRILHNQVWI, GVLMAALIHTGPVEFLYYWLH, PFAEHIAYFILFAIPLLTTLL, TASIISFAGYIIYIDFMNNMG, and LLWPFTSLSMIFTLFYARLFV. A Fatty acid hydroxylase domain is found at 138–272; it reads VEFLYYWLHK…MPLYDYIYGT (135 aa).

The protein belongs to the sterol desaturase family. As to quaternary structure, homodimer. Interacts with CER3, CYTB5-B, CYTB5-C, CYTB5-D and CYTB5-E. Expressed in seedlings, stems, leaves, flowers, fruits and siliques. Not detected in roots, pollen and seeds. Expressed in trichomes, cotyledons, shoot apical meristem and leaf primordia. Preferentially associated with young leaves rather than mature leaves. Expressed in the epidermis of the stem and caulines leaves, in the carpels and the sepals.

It localises to the endoplasmic reticulum membrane. The catalysed reaction is a long-chain fatty aldehyde + 2 NADPH + O2 + H(+) = a long-chain alkane + formate + 2 NADP(+) + H2O. Functionally, aldehyde decarbonylase involved in the conversion of aldehydes to alkanes. Core component of a very-long-chain alkane synthesis complex. Involved in epicuticular wax biosynthesis and pollen fertility. The polypeptide is Very-long-chain aldehyde decarbonylase CER1 (CER1) (Arabidopsis thaliana (Mouse-ear cress)).